We begin with the raw amino-acid sequence, 445 residues long: Cytoplasmic tRNA 2-thiolation protein 2 (445 aa).

Residues Met1–Asp11 are compositionally biased toward acidic residues. The segment at Met1–Glu26 is disordered. Positions Gly13–Ser22 are enriched in basic and acidic residues.

This sequence belongs to the CTU2/NCS2 family.

It localises to the cytoplasm. Its pathway is tRNA modification; 5-methoxycarbonylmethyl-2-thiouridine-tRNA biosynthesis. Its function is as follows. Plays a central role in 2-thiolation of mcm(5)S(2)U at tRNA wobble positions of tRNA(Lys), tRNA(Glu) and tRNA(Gln). May act by forming a heterodimer with NCS6/CTU1 that ligates sulfur from thiocarboxylated URM1 onto the uridine of tRNAs at wobble position. In Aedes aegypti (Yellowfever mosquito), this protein is Cytoplasmic tRNA 2-thiolation protein 2.